Here is a 384-residue protein sequence, read N- to C-terminus: WD repeat-containing protein 55 (384 aa).

Positions 1 to 33 (MDPTCQESPAEDSNNEEDLDSTKAAPRIRDTPE) are disordered. Over residues 9 to 19 (PAEDSNNEEDL) the composition is skewed to acidic residues. WD repeat units lie at residues 36 to 75 (VLEAPASGLAFHPTRDLLAAGDVDGDVFVFAYSCQEGETK), 82 to 121 (HHLKSCRAVVFSEDGQKLVTVSKDKAIHVLDVEQGQLERR), 125 to 163 (AHSAPINSLLLVDENVLVTGDDTGGIRLWDQRKEGPLMD), 166 to 205 (QHEEYIADMALDPAKKLLLTASGDGCLGVFNIKRRRFELL), 208 to 247 (PQSGDLTSVALMKYGKKVACGSSEGTIYLFNWNGFGATSD), 250 to 289 (ALRAESIDCMVPVTENLLCTGSTDGIIRAVNILPNRVVGT), and 293 to 332 (HAGEPVEELALSHCGHFLASSGHDQRLKFWDMTQLRTVVV). Residues S354 and S383 each carry the phosphoserine modification. The interval 362 to 384 (LREDEEEAKAPEEVSGESDDDSD) is disordered. Over residues 375 to 384 (VSGESDDDSD) the composition is skewed to acidic residues.

Belongs to the WD repeat WDR55 family.

Its subcellular location is the nucleus. It is found in the nucleolus. It localises to the cytoplasm. Nucleolar protein that acts as a modulator of rRNA synthesis. Plays a central role during organogenesis. The polypeptide is WD repeat-containing protein 55 (Wdr55) (Rattus norvegicus (Rat)).